A 105-amino-acid chain; its full sequence is Fluoride-specific ion channel FluC (105 aa).

The next 3 helical transmembrane spans lie at 14 to 34 (FPLPILTVNVLGSFLMGVFVV), 44 to 64 (LSPLVMTGLLGGFTTFSAFSL), and 79 to 99 (ALYVALSVGLSIAGLMAGLWL). Na(+) contacts are provided by glycine 54 and threonine 57.

The protein belongs to the fluoride channel Fluc/FEX (TC 1.A.43) family.

The protein resides in the cell inner membrane. The enzyme catalyses fluoride(in) = fluoride(out). With respect to regulation, na(+) is not transported, but it plays an essential structural role and its presence is essential for fluoride channel function. In terms of biological role, fluoride-specific ion channel. Important for reducing fluoride concentration in the cell, thus reducing its toxicity. The polypeptide is Fluoride-specific ion channel FluC (Jannaschia sp. (strain CCS1)).